Here is a 354-residue protein sequence, read N- to C-terminus: Isopentenyl-diphosphate delta-isomerase (354 aa).

Residue 6–7 coordinates substrate; sequence RK. Residues 63–65, Ser-93, and Asn-122 contribute to the FMN site; that span reads AMT. 93 to 95 contributes to the substrate binding site; the sequence is SQR. Gln-160 lines the substrate pocket. Residue Glu-161 coordinates Mg(2+). FMN-binding positions include Lys-192, Thr-221, 273-275, and 294-295; these read GIR and SQ.

It belongs to the IPP isomerase type 2 family. Homooctamer. Dimer of tetramers. FMN serves as cofactor. It depends on NADPH as a cofactor. Requires Mg(2+) as cofactor.

It localises to the cytoplasm. The enzyme catalyses isopentenyl diphosphate = dimethylallyl diphosphate. Functionally, involved in the biosynthesis of isoprenoids. Catalyzes the 1,3-allylic rearrangement of the homoallylic substrate isopentenyl (IPP) to its allylic isomer, dimethylallyl diphosphate (DMAPP). The sequence is that of Isopentenyl-diphosphate delta-isomerase from Pyrobaculum islandicum (strain DSM 4184 / JCM 9189 / GEO3).